A 778-amino-acid chain; its full sequence is Phosphoribosylformylglycinamidine synthase subunit PurL (778 aa).

His44 is a catalytic residue. Residues Tyr47 and Lys86 each contribute to the ATP site. Glu88 is a binding site for Mg(2+). Substrate-binding positions include 89-92 (SHNH) and Arg111. Residue His90 is the Proton acceptor of the active site. Residues Asp112 and Asp265 each coordinate Mg(2+). 309–311 (ESQ) contributes to the substrate binding site. Positions 455–474 (TRQPPGEGLPGRSGQAGPPK) are disordered. ATP is bound by residues Asn518 and Gly555. Mg(2+) is bound at residue Asn556. Ser558 contacts substrate.

It belongs to the FGAMS family. Monomer. Part of the FGAM synthase complex composed of 1 PurL, 1 PurQ and 2 PurS subunits.

The protein resides in the cytoplasm. It carries out the reaction N(2)-formyl-N(1)-(5-phospho-beta-D-ribosyl)glycinamide + L-glutamine + ATP + H2O = 2-formamido-N(1)-(5-O-phospho-beta-D-ribosyl)acetamidine + L-glutamate + ADP + phosphate + H(+). The protein operates within purine metabolism; IMP biosynthesis via de novo pathway; 5-amino-1-(5-phospho-D-ribosyl)imidazole from N(2)-formyl-N(1)-(5-phospho-D-ribosyl)glycinamide: step 1/2. In terms of biological role, part of the phosphoribosylformylglycinamidine synthase complex involved in the purines biosynthetic pathway. Catalyzes the ATP-dependent conversion of formylglycinamide ribonucleotide (FGAR) and glutamine to yield formylglycinamidine ribonucleotide (FGAM) and glutamate. The FGAM synthase complex is composed of three subunits. PurQ produces an ammonia molecule by converting glutamine to glutamate. PurL transfers the ammonia molecule to FGAR to form FGAM in an ATP-dependent manner. PurS interacts with PurQ and PurL and is thought to assist in the transfer of the ammonia molecule from PurQ to PurL. The chain is Phosphoribosylformylglycinamidine synthase subunit PurL from Symbiobacterium thermophilum (strain DSM 24528 / JCM 14929 / IAM 14863 / T).